The following is a 298-amino-acid chain: ATP phosphoribosyltransferase (298 aa).

The protein belongs to the ATP phosphoribosyltransferase family. Long subfamily. The cofactor is Mg(2+).

It is found in the cytoplasm. It carries out the reaction 1-(5-phospho-beta-D-ribosyl)-ATP + diphosphate = 5-phospho-alpha-D-ribose 1-diphosphate + ATP. It participates in amino-acid biosynthesis; L-histidine biosynthesis; L-histidine from 5-phospho-alpha-D-ribose 1-diphosphate: step 1/9. With respect to regulation, feedback inhibited by histidine. In terms of biological role, catalyzes the condensation of ATP and 5-phosphoribose 1-diphosphate to form N'-(5'-phosphoribosyl)-ATP (PR-ATP). Has a crucial role in the pathway because the rate of histidine biosynthesis seems to be controlled primarily by regulation of HisG enzymatic activity. The chain is ATP phosphoribosyltransferase from Vibrio campbellii (strain ATCC BAA-1116).